Reading from the N-terminus, the 342-residue chain is S-adenosylmethionine:tRNA ribosyltransferase-isomerase (342 aa).

This sequence belongs to the QueA family. As to quaternary structure, monomer.

Its subcellular location is the cytoplasm. The catalysed reaction is 7-aminomethyl-7-carbaguanosine(34) in tRNA + S-adenosyl-L-methionine = epoxyqueuosine(34) in tRNA + adenine + L-methionine + 2 H(+). It functions in the pathway tRNA modification; tRNA-queuosine biosynthesis. Its function is as follows. Transfers and isomerizes the ribose moiety from AdoMet to the 7-aminomethyl group of 7-deazaguanine (preQ1-tRNA) to give epoxyqueuosine (oQ-tRNA). This Novosphingobium aromaticivorans (strain ATCC 700278 / DSM 12444 / CCUG 56034 / CIP 105152 / NBRC 16084 / F199) protein is S-adenosylmethionine:tRNA ribosyltransferase-isomerase.